The chain runs to 412 residues: Alanyl-tRNA editing protein Aarsd1 (412 aa).

His109 and His113 together coordinate Zn(2+). The residue at position 174 (Ser174) is a Phosphoserine. The Zn(2+) site is built by Cys209 and His213.

Belongs to the class-II aminoacyl-tRNA synthetase family. Alax-L subfamily. Zn(2+) serves as cofactor.

The protein localises to the cytoplasm. In terms of biological role, functions in trans to edit the amino acid moiety from incorrectly charged Ser-tRNA(Ala). This is Alanyl-tRNA editing protein Aarsd1 (Aarsd1) from Mus musculus (Mouse).